The sequence spans 308 residues: Mycothiol acetyltransferase (308 aa).

E44 contributes to the 1D-myo-inositol 2-(L-cysteinylamino)-2-deoxy-alpha-D-glucopyranoside binding site. An acetyl-CoA-binding site is contributed by 83-85 (AVV). The 148-residue stretch at 161–308 (VRLRTYAGSA…DVAYGRPEGD (148 aa)) folds into the N-acetyltransferase domain. 1D-myo-inositol 2-(L-cysteinylamino)-2-deoxy-alpha-D-glucopyranoside-binding residues include E188, K230, and E238. Acetyl-CoA is bound by residues 242-244 (VGV) and 249-255 (QGRGLGR). Y276 contacts 1D-myo-inositol 2-(L-cysteinylamino)-2-deoxy-alpha-D-glucopyranoside. Acetyl-CoA is bound at residue 281 to 286 (NTAALH).

Belongs to the acetyltransferase family. MshD subfamily. Monomer.

It carries out the reaction 1D-myo-inositol 2-(L-cysteinylamino)-2-deoxy-alpha-D-glucopyranoside + acetyl-CoA = mycothiol + CoA + H(+). Its function is as follows. Catalyzes the transfer of acetyl from acetyl-CoA to desacetylmycothiol (Cys-GlcN-Ins) to form mycothiol. The polypeptide is Mycothiol acetyltransferase (Gordonia bronchialis (strain ATCC 25592 / DSM 43247 / BCRC 13721 / JCM 3198 / KCTC 3076 / NBRC 16047 / NCTC 10667) (Rhodococcus bronchialis)).